A 206-amino-acid chain; its full sequence is Bis(5'-adenosyl)-triphosphatase (206 aa).

An HIT domain is found at 3–115 (KPIYFSKFLV…KINNVGDLIY (113 aa)). A Histidine triad motif motif is present at residues 96 to 100 (HLHTH). The active-site Tele-AMP-histidine intermediate is H98. The interval 143-164 (RQARKNNSTSATVDGDELSQGP) is disordered.

As to quaternary structure, homodimer. Requires Mn(2+) as cofactor.

It is found in the cytoplasm. Its subcellular location is the nucleus. It localises to the mitochondrion. The enzyme catalyses P(1),P(3)-bis(5'-adenosyl) triphosphate + H2O = AMP + ADP + 2 H(+). Its function is as follows. Cleaves A-5'-PPP-5'A to yield AMP and ADP. Can cleave all dinucleoside polyphosphates, provided the phosphate chain contains at least 3 phosphates and that 1 of the 2 bases composing the nucleotide is a purine. Is most effective on dinucleoside triphosphates. Negatively regulates intracellular dinucleoside polyphosphate levels, which elevate following heat shock. This chain is Bis(5'-adenosyl)-triphosphatase (HNT2), found in Saccharomyces cerevisiae (strain RM11-1a) (Baker's yeast).